Here is a 213-residue protein sequence, read N- to C-terminus: ATP-dependent dethiobiotin synthetase BioD (213 aa).

13–18 (GIGKTV) provides a ligand contact to ATP. Thr-17 contributes to the Mg(2+) binding site. Residue Lys-33 is part of the active site. Glu-100 serves as a coordination point for Mg(2+). ATP contacts are provided by residues 100–103 (EGAG) and 184–186 (PRL).

Belongs to the dethiobiotin synthetase family. Homodimer. The cofactor is Mg(2+).

The protein resides in the cytoplasm. The catalysed reaction is (7R,8S)-7,8-diammoniononanoate + CO2 + ATP = (4R,5S)-dethiobiotin + ADP + phosphate + 3 H(+). It participates in cofactor biosynthesis; biotin biosynthesis; biotin from 7,8-diaminononanoate: step 1/2. Catalyzes a mechanistically unusual reaction, the ATP-dependent insertion of CO2 between the N7 and N8 nitrogen atoms of 7,8-diaminopelargonic acid (DAPA, also called 7,8-diammoniononanoate) to form a ureido ring. This Rhodopseudomonas palustris (strain HaA2) protein is ATP-dependent dethiobiotin synthetase BioD.